A 271-amino-acid polypeptide reads, in one-letter code: Low choriolytic enzyme (271 aa).

The first 20 residues, 1-20 (MDLLAKASVLLLLLLSLSNA), serve as a signal peptide directing secretion. The propeptide at 21-71 (QTDNMEEAENGSSKEEIDESELEDVSSIIFRMNNNSMEELLEGDLVLPKTR) is activation peptide. 2 N-linked (GlcNAc...) asparagine glycosylation sites follow: Asn30 and Asn54. The region spanning 72-271 (NAMKCFGAPD…ILRVNKLYKC (200 aa)) is the Peptidase M12A domain. Cystine bridges form between Cys76-Cys83, Cys123-Cys271, and Cys144-Cys164. Residue His172 participates in Zn(2+) binding. Glu173 is a catalytic residue. Zn(2+) is bound by residues His176 and His182. Residue Asn211 is glycosylated (N-linked (GlcNAc...) asparagine).

Zn(2+) is required as a cofactor.

It is found in the zymogen granule. It carries out the reaction Hydrolysis of the inner layer of fish egg envelope. Also hydrolysis of casein and small molecule substrates such as succinyl-Leu-Leu-Val-Tyr-|-7-(4-methyl)coumarylamide.. Participates in the breakdown of the egg envelope, which is derived from the egg extracellular matrix, at the time of hatching. Thus allowing the newly hatched fish to swim free. LCE solubilizes the egg envelope only after it has been swollen by the action of HCE. The chain is Low choriolytic enzyme (lce) from Oryzias latipes (Japanese rice fish).